A 212-amino-acid chain; its full sequence is Bcl-2-related ovarian killer protein (212 aa).

Serine 7 bears the Phosphoserine mark. Residues 15–45 (MDAFDRSPTDKELVAQAKALGREYVHARLLR) form an interactions with ITPR1 region. Glycyl lysine isopeptide (Lys-Gly) (interchain with G-Cter in ubiquitin) cross-links involve residues lysine 25 and lysine 32. Positions 32–44 (KALGREYVHARLL) match the BH4 motif. The short motif at 66-82 (VCAVLLRLGDELEMIRP) is the BH3 element. The segment at 70–78 (LLRLGDELE) is nuclear export signal. Positions 112–131 (HIFSAGITWGKVVSLYAVAA) match the BH1 motif. Glycyl lysine isopeptide (Lys-Gly) (interchain with G-Cter in ubiquitin) cross-links involve residues lysine 159 and lysine 176. The BH2 motif lies at 164 to 178 (WLRRRGGWTDVLKCV). Residues 189–209 (WLVAALCSFGRFLKAAFFVLL) form a helical membrane-spanning segment.

The protein belongs to the Bcl-2 family. In terms of assembly, monomer; positively regulates apoptotic process. Homodimer. Heterodimer. Oligomer; promoted by apoptotic stimuli and BH3-only proteins; mediates constitutive activation. Interacts (via BH4 domain) with ITPR1; enhances BOK expression and stabilization; limits apoptosis and prevents ubiquitination and then degradation; protects ITPR1 from proteolysis by CASP3 during apoptosis. Interacts with ITPR2 and ITPR3; binds most strongly to ITPR2, and barely to ITPR3; regulates their expression. Interacts with XPO1; translocates to the cytoplasm. Interacts with BNIP3; promotes oligomerization. Post-translationally, ubiquitinated by AMFR/gp78 E3 ubiquitin ligase complex; mediates degradation by ubiquitin-proteasome pathway in a VCP/p97-dependent manner; prevents from pro-apoptotic activity; promotes degradation of newly synthesized proteins that are not ITPR1 associated. As to expression, expressed mainly in oocytes; weak expression in granulosa cells of the developing follicles. In adult human ovaries, expressed in granulosa cells at all follicular stages, but expression in primordial/primary follicles granulosa cell is stronger than in secondary and antral follicles.

It is found in the mitochondrion membrane. Its subcellular location is the endoplasmic reticulum membrane. It localises to the mitochondrion inner membrane. The protein resides in the cytoplasm. The protein localises to the nucleus. It is found in the mitochondrion. Its subcellular location is the endoplasmic reticulum. It localises to the mitochondrion outer membrane. The protein resides in the early endosome membrane. The protein localises to the recycling endosome membrane. It is found in the nucleus outer membrane. Its subcellular location is the golgi apparatus. It localises to the cis-Golgi network membrane. The protein resides in the trans-Golgi network membrane. The protein localises to the membrane. In terms of biological role, apoptosis regulator that functions through different apoptotic signaling pathways. Plays a roles as pro-apoptotic protein that positively regulates intrinsic apoptotic process in a BAX- and BAK1-dependent manner or in a BAX- and BAK1-independent manner. In response to endoplasmic reticulum stress promotes mitochondrial apoptosis through downstream BAX/BAK1 activation and positive regulation of PERK-mediated unfolded protein response. Activates apoptosis independently of heterodimerization with survival-promoting BCL2 and BCL2L1 through induction of mitochondrial outer membrane permeabilization, in a BAX- and BAK1-independent manner, in response to inhibition of ERAD-proteasome degradation system, resulting in cytochrome c release. In response to DNA damage, mediates intrinsic apoptotic process in a TP53-dependent manner. Plays a role in granulosa cell apoptosis by CASP3 activation. Plays a roles as anti-apoptotic protein during neuronal apoptotic process, by negatively regulating poly ADP-ribose polymerase-dependent cell death through regulation of neuronal calcium homeostasis and mitochondrial bioenergetics in response to NMDA excitation. In addition to its role in apoptosis, may regulate trophoblast cell proliferation during the early stages of placental development, by acting on G1/S transition through regulation of CCNE1 expression. May also play a role as an inducer of autophagy by disrupting interaction between MCL1 and BECN1. Pro-apoptotic molecule exerting its function through the mitochondrial pathway. The sequence is that of Bcl-2-related ovarian killer protein from Homo sapiens (Human).